Reading from the N-terminus, the 480-residue chain is Beta-amyrin 28-monooxygenase (480 aa).

A helical transmembrane segment spans residues 3 to 23 (VFFLSLLLICVLSVSIRLYLL). C427 is a heme binding site.

It belongs to the cytochrome P450 family. Heme is required as a cofactor. Expressed in leaves, stems and fruit skin.

Its subcellular location is the membrane. The enzyme catalyses beta-amyrin + 3 reduced [NADPH--hemoprotein reductase] + 3 O2 = oleanolate + 3 oxidized [NADPH--hemoprotein reductase] + 4 H2O + 4 H(+). Its function is as follows. Catalyzes the carboxylation of beta-amyrin at the C-28 position to form oleanolic acid. May be involved in saponin biosynthesis in fruit skin. This is Beta-amyrin 28-monooxygenase from Vitis vinifera (Grape).